Reading from the N-terminus, the 501-residue chain is Vitamin D 25-hydroxylase (501 aa).

Position 250 (alanine 250) interacts with substrate. Heme is bound at residue cysteine 448.

The protein belongs to the cytochrome P450 family. In terms of assembly, homodimer. The cofactor is heme. Highly expressed in the liver and testis.

Its subcellular location is the endoplasmic reticulum membrane. It is found in the microsome membrane. It catalyses the reaction calciol + reduced [NADPH--hemoprotein reductase] + O2 = calcidiol + oxidized [NADPH--hemoprotein reductase] + H2O + H(+). The enzyme catalyses vitamin D2 + reduced [NADPH--hemoprotein reductase] + O2 = 25-hydroxyvitamin D2 + oxidized [NADPH--hemoprotein reductase] + H2O + H(+). It carries out the reaction 1alpha-hydroxyvitamin D2 + reduced [NADPH--hemoprotein reductase] + O2 = 1alpha,25-dihydroxyvitamin D2 + oxidized [NADPH--hemoprotein reductase] + H2O + H(+). The catalysed reaction is alfacalcidol + reduced [NADPH--hemoprotein reductase] + O2 = calcitriol + oxidized [NADPH--hemoprotein reductase] + H2O + H(+). Its pathway is hormone biosynthesis; vitamin D biosynthesis. Its function is as follows. A cytochrome P450 monooxygenase involved in activation of vitamin D precursors. Catalyzes hydroxylation at C-25 of both forms of vitamin D, vitamin D(2) and D(3) (calciol). Can metabolize vitamin D analogs/prodrugs 1alpha-hydroxyvitamin D(2) (doxercalciferol) and 1alpha-hydroxyvitamin D(3) (alfacalcidol) forming 25-hydroxy derivatives. Mechanistically, uses molecular oxygen inserting one oxygen atom into a substrate, and reducing the second into a water molecule, with two electrons provided by NADPH via cytochrome P450 reductase (CPR; NADPH-ferrihemoprotein reductase). The polypeptide is Vitamin D 25-hydroxylase (Cyp2r1) (Mus musculus (Mouse)).